We begin with the raw amino-acid sequence, 296 residues long: Cytidine deaminase (296 aa).

CMP/dCMP-type deaminase domains lie at 52–172 (TAVE…FGPK) and 191–296 (THAD…YFAL). A substrate-binding site is contributed by 93-95 (NQE). Histidine 106 is a binding site for Zn(2+). Glutamate 108 (proton donor) is an active-site residue. Positions 133 and 136 each coordinate Zn(2+).

Belongs to the cytidine and deoxycytidylate deaminase family. Homodimer. Requires Zn(2+) as cofactor.

It catalyses the reaction cytidine + H2O + H(+) = uridine + NH4(+). It carries out the reaction 2'-deoxycytidine + H2O + H(+) = 2'-deoxyuridine + NH4(+). In terms of biological role, this enzyme scavenges exogenous and endogenous cytidine and 2'-deoxycytidine for UMP synthesis. In Actinobacillus succinogenes (strain ATCC 55618 / DSM 22257 / CCUG 43843 / 130Z), this protein is Cytidine deaminase.